The sequence spans 212 residues: uncharacterized protein (212 aa).

The protein belongs to the flavoredoxin family. FMN is required as a cofactor.

This is an uncharacterized protein from Methanothermobacter thermautotrophicus (strain ATCC 29096 / DSM 1053 / JCM 10044 / NBRC 100330 / Delta H) (Methanobacterium thermoautotrophicum).